The following is a 516-amino-acid chain: Probable cytosol aminopeptidase (516 aa).

Lysine 288 and aspartate 293 together coordinate Mn(2+). Lysine 300 is an active-site residue. The Mn(2+) site is built by aspartate 311, aspartate 370, and glutamate 372. Arginine 374 is a catalytic residue.

It belongs to the peptidase M17 family. Requires Mn(2+) as cofactor.

It is found in the cytoplasm. The enzyme catalyses Release of an N-terminal amino acid, Xaa-|-Yaa-, in which Xaa is preferably Leu, but may be other amino acids including Pro although not Arg or Lys, and Yaa may be Pro. Amino acid amides and methyl esters are also readily hydrolyzed, but rates on arylamides are exceedingly low.. It catalyses the reaction Release of an N-terminal amino acid, preferentially leucine, but not glutamic or aspartic acids.. Presumably involved in the processing and regular turnover of intracellular proteins. Catalyzes the removal of unsubstituted N-terminal amino acids from various peptides. This is Probable cytosol aminopeptidase from Cupriavidus taiwanensis (strain DSM 17343 / BCRC 17206 / CCUG 44338 / CIP 107171 / LMG 19424 / R1) (Ralstonia taiwanensis (strain LMG 19424)).